An 84-amino-acid chain; its full sequence is Exodeoxyribonuclease 7 small subunit (84 aa).

Belongs to the XseB family. As to quaternary structure, heterooligomer composed of large and small subunits.

Its subcellular location is the cytoplasm. The catalysed reaction is Exonucleolytic cleavage in either 5'- to 3'- or 3'- to 5'-direction to yield nucleoside 5'-phosphates.. Its function is as follows. Bidirectionally degrades single-stranded DNA into large acid-insoluble oligonucleotides, which are then degraded further into small acid-soluble oligonucleotides. The chain is Exodeoxyribonuclease 7 small subunit from Yersinia pseudotuberculosis serotype O:1b (strain IP 31758).